A 365-amino-acid chain; its full sequence is Probable dual-specificity RNA methyltransferase RlmN (365 aa).

Glutamate 108 (proton acceptor) is an active-site residue. The 234-residue stretch at 114–347 (HNYGNSVCVT…VTIRREHGHD (234 aa)) folds into the Radical SAM core domain. Cysteine 121 and cysteine 352 form a disulfide bridge. [4Fe-4S] cluster contacts are provided by cysteine 128, cysteine 132, and cysteine 135. Residues 178 to 179 (GE), serine 210, 233 to 235 (SLH), and asparagine 309 each bind S-adenosyl-L-methionine. The active-site S-methylcysteine intermediate is cysteine 352.

It belongs to the radical SAM superfamily. RlmN family. [4Fe-4S] cluster is required as a cofactor.

It localises to the cytoplasm. It catalyses the reaction adenosine(2503) in 23S rRNA + 2 reduced [2Fe-2S]-[ferredoxin] + 2 S-adenosyl-L-methionine = 2-methyladenosine(2503) in 23S rRNA + 5'-deoxyadenosine + L-methionine + 2 oxidized [2Fe-2S]-[ferredoxin] + S-adenosyl-L-homocysteine. The catalysed reaction is adenosine(37) in tRNA + 2 reduced [2Fe-2S]-[ferredoxin] + 2 S-adenosyl-L-methionine = 2-methyladenosine(37) in tRNA + 5'-deoxyadenosine + L-methionine + 2 oxidized [2Fe-2S]-[ferredoxin] + S-adenosyl-L-homocysteine. Functionally, specifically methylates position 2 of adenine 2503 in 23S rRNA and position 2 of adenine 37 in tRNAs. In Geobacillus kaustophilus (strain HTA426), this protein is Probable dual-specificity RNA methyltransferase RlmN.